A 329-amino-acid chain; its full sequence is MSKNLLDQLREVTVVVADTGDIEAIEKFKPRDATTNPSLITAAAQMPQYQDIVDDTLKGARQTLGPGASAAQVANRAFDRLAVSFGLKILQIIEGRVSTEVDARLSYDTEGTIEKAREIIKQYEAAGVSKERVLIKIAATWEGIEAAAVLEKEGIHCNLTLLFGLHQAIACAENGITLISPFVGRILDWYKKDTGRESYAPHEDPGVLSVTQIYNYYKKFGYKTEVMGASFRNIGEITELAGCDLLTIAPSLLAELQATEGELPRKLDPAKAKDYPIEKIHVNKYTFDKMHAENRMATEKLEEGIQGFTKALEQLEKLLADRLAHLEAA.

Catalysis depends on Lys136, which acts as the Schiff-base intermediate with substrate.

The protein belongs to the transaldolase family. Type 1 subfamily. Homodimer.

It localises to the cytoplasm. The enzyme catalyses D-sedoheptulose 7-phosphate + D-glyceraldehyde 3-phosphate = D-erythrose 4-phosphate + beta-D-fructose 6-phosphate. The protein operates within carbohydrate degradation; pentose phosphate pathway; D-glyceraldehyde 3-phosphate and beta-D-fructose 6-phosphate from D-ribose 5-phosphate and D-xylulose 5-phosphate (non-oxidative stage): step 2/3. Functionally, transaldolase is important for the balance of metabolites in the pentose-phosphate pathway. The sequence is that of Transaldolase from Methylococcus capsulatus (strain ATCC 33009 / NCIMB 11132 / Bath).